We begin with the raw amino-acid sequence, 835 residues long: Probable alpha-glucuronidase A (835 aa).

An N-terminal signal peptide occupies residues 1–18 (MRWSFLTVLLWLVSLTGA). Residues Asn49, Asn101, Asn148, Asn221, Asn278, Asn309, Asn342, Asn460, Asn522, Asn571, Asn677, and Asn727 are each glycosylated (N-linked (GlcNAc...) asparagine).

The protein belongs to the glycosyl hydrolase 67 family.

The protein resides in the secreted. It catalyses the reaction an alpha-D-glucuronoside + H2O = D-glucuronate + an alcohol. Alpha-glucuronidase involved in the hydrolysis of xylan, a major structural heterogeneous polysaccharide found in plant biomass representing the second most abundant polysaccharide in the biosphere, after cellulose. Releases 4-O-methylglucuronic acid from xylan. The polypeptide is Probable alpha-glucuronidase A (aguA) (Aspergillus oryzae (strain ATCC 42149 / RIB 40) (Yellow koji mold)).